Consider the following 246-residue polypeptide: Ribonuclease PH (246 aa).

The segment at M1–S33 is disordered. Residues R90 and G128–R130 each bind phosphate.

This sequence belongs to the RNase PH family. Homohexameric ring arranged as a trimer of dimers.

It catalyses the reaction tRNA(n+1) + phosphate = tRNA(n) + a ribonucleoside 5'-diphosphate. Its function is as follows. Phosphorolytic 3'-5' exoribonuclease that plays an important role in tRNA 3'-end maturation. Removes nucleotide residues following the 3'-CCA terminus of tRNAs; can also add nucleotides to the ends of RNA molecules by using nucleoside diphosphates as substrates, but this may not be physiologically important. Probably plays a role in initiation of 16S rRNA degradation (leading to ribosome degradation) during starvation. In Deinococcus radiodurans (strain ATCC 13939 / DSM 20539 / JCM 16871 / CCUG 27074 / LMG 4051 / NBRC 15346 / NCIMB 9279 / VKM B-1422 / R1), this protein is Ribonuclease PH.